The sequence spans 74 residues: Conotoxin TsMLCL-04 (74 aa).

A signal peptide spans 1–19; that stretch reads MLCLPVFIILLLLASPAAP. Residues 20–60 constitute a propeptide that is removed on maturation; that stretch reads NPLETRIQRDLIRAALEDADMKTNERFLEGVISTIKDFAGK.

It belongs to the conotoxin T superfamily. Post-translationally, contains 2 disulfide bonds that can be either 'C1-C3, C2-C4' or 'C1-C4, C2-C3', since these disulfide connectivities have been observed for conotoxins with cysteine framework V (for examples, see AC P0DQQ7 and AC P81755). As to expression, expressed by the venom duct.

Its subcellular location is the secreted. The polypeptide is Conotoxin TsMLCL-04 (Conus tessulatus (Tessellate cone)).